Here is an 831-residue protein sequence, read N- to C-terminus: G-type lectin S-receptor-like serine/threonine-protein kinase At1g61390 (831 aa).

The first 42 residues, 1 to 42 (MYKLPQRNCADKQEYTVHMRKMGMVIFACLLLLIIFPTFGYA), serve as a signal peptide directing secretion. In terms of domain architecture, Bulb-type lectin spans 43–162 (DINTSSPLSI…VSGKTLWKSF (120 aa)). The Extracellular portion of the chain corresponds to 43–448 (DINTSSPLSI…SSELAGSNRT (406 aa)). N-linked (GlcNAc...) asparagine glycosylation is found at asparagine 45, asparagine 71, asparagine 106, and asparagine 112. In terms of domain architecture, EGF-like; atypical spans 298-334 (PTSSCDLYRACGPFGLCVRSRNPKCICLKGFVPKSDD). Intrachain disulfides connect cysteine 302-cysteine 314 and cysteine 308-cysteine 322. N-linked (GlcNAc...) asparagine glycosylation is found at asparagine 340, asparagine 356, asparagine 399, and asparagine 446. Residues 353–439 (CHTNSSTKTQ…GESLSLRLAS (87 aa)) enclose the PAN domain. 2 cysteine pairs are disulfide-bonded: cysteine 392-cysteine 413 and cysteine 396-cysteine 402. Residues 449-469 (KIILGTTVSLSIFVILVFAAY) form a helical membrane-spanning segment. Residues 470–831 (KSWRYRTKQN…EITQSVIQGR (362 aa)) lie on the Cytoplasmic side of the membrane. Positions 520–803 (FSSSNKLGQG…ELPSPKQPTF (284 aa)) constitute a Protein kinase domain. Residues 526–534 (LGQGGFGPV) and lysine 548 each bind ATP. A phosphoserine mark is found at serine 554 and serine 569. A caM-binding region spans residues 609–626 (TLKFEIDWQKRFNIIQGV). The active-site Proton acceptor is the aspartate 645. Phosphoserine occurs at positions 649 and 662. Position 679 is a phosphothreonine (threonine 679). Phosphoserine is present on residues serine 722 and serine 814.

This sequence belongs to the protein kinase superfamily. Ser/Thr protein kinase family.

It localises to the cell membrane. The enzyme catalyses L-seryl-[protein] + ATP = O-phospho-L-seryl-[protein] + ADP + H(+). It catalyses the reaction L-threonyl-[protein] + ATP = O-phospho-L-threonyl-[protein] + ADP + H(+). This Arabidopsis thaliana (Mouse-ear cress) protein is G-type lectin S-receptor-like serine/threonine-protein kinase At1g61390.